A 755-amino-acid polypeptide reads, in one-letter code: Exocyst complex component 3 (755 aa).

An N6-acetyllysine modification is found at K38.

It belongs to the SEC6 family. As to quaternary structure, the exocyst complex is composed of EXOC1, EXOC2, EXOC3, EXOC4, EXOC5, EXOC6, EXOC7 and EXOC8. Interacts with EXOC3L1. Interacts with BIRC6/bruce. Interacts with MYRIP. Interacts with SLC6A9.

It is found in the cytoplasm. Its subcellular location is the perinuclear region. It localises to the cell projection. The protein localises to the growth cone. The protein resides in the midbody. It is found in the golgi apparatus. Its subcellular location is the neuron projection. Its function is as follows. Component of the exocyst complex involved in the docking of exocytic vesicles with fusion sites on the plasma membrane. This Mus musculus (Mouse) protein is Exocyst complex component 3 (Exoc3).